The chain runs to 247 residues: LHFPL tetraspan subfamily member 4 protein (247 aa).

Transmembrane regions (helical) follow at residues 22–42 (IGVL…VVFI), 97–117 (FFVL…ALFF), 127–147 (ICAW…MIFP), and 178–198 (ILAI…FVLG).

It belongs to the LHFP family. Interacts with GABA(A) receptor subunits. Interacts with GABRB3. Interacts with GABRA2. Interacts with GABRG2. Identified in a complex of 720 kDa composed of LHFPL4, NLGN2, GABRA1, GABRB2, GABRG2 and GABRB3. Interacts with GABRA1. Interacts with NLGN2; leading to mutual regulation of protein level and synaptic clustering.

It localises to the cell projection. It is found in the dendrite. The protein localises to the postsynaptic cell membrane. In terms of biological role, plays a role in the regulation of inhibitory synapse formation and function by being involved in maintening gamma-aminobutyric acid receptors (GABAARs) clustering and their associated scaffold proteins at inhibitory synaptic sites. Acts in concert with NLGN2 to recruit or stabilize GABAARs. This Bos taurus (Bovine) protein is LHFPL tetraspan subfamily member 4 protein.